The primary structure comprises 271 residues: Putative protein FAM220BP (271 aa).

The chain is Putative protein FAM220BP (FAM220BP) from Homo sapiens (Human).